The following is a 241-amino-acid chain: NH(3)-dependent NAD(+) synthetase (241 aa).

27–34 (GISGGIDS) is an ATP binding site. Asp-33 is a binding site for Mg(2+). Residue Arg-109 participates in deamido-NAD(+) binding. An ATP-binding site is contributed by Thr-129. Glu-134 contacts Mg(2+). Deamido-NAD(+)-binding residues include Lys-142 and Asp-149. The ATP site is built by Lys-158 and Thr-180. 231–232 (HK) is a deamido-NAD(+) binding site.

This sequence belongs to the NAD synthetase family. In terms of assembly, homodimer.

The enzyme catalyses deamido-NAD(+) + NH4(+) + ATP = AMP + diphosphate + NAD(+) + H(+). The protein operates within cofactor biosynthesis; NAD(+) biosynthesis; NAD(+) from deamido-NAD(+) (ammonia route): step 1/1. Catalyzes the ATP-dependent amidation of deamido-NAD to form NAD. Uses ammonia as a nitrogen source. The protein is NH(3)-dependent NAD(+) synthetase of Thermoplasma acidophilum (strain ATCC 25905 / DSM 1728 / JCM 9062 / NBRC 15155 / AMRC-C165).